The primary structure comprises 400 residues: Lysophospholipid transporter LplT (400 aa).

12 helical membrane passes run 19–39 (VIVA…ATLA), 53–73 (VLQM…GQIA), 91–111 (AGAA…LVGI), 139–159 (MMEA…GVLA), 164–184 (IAAL…NLFI), 195–213 (SWRL…VVLW), 227–247 (LFWG…PVAL), 257–277 (YLNA…AKLV), 281–301 (TVSR…IFSL), 304–324 (ALLP…FFVV), 352–372 (NSAM…GVPA), and 373–393 (VAIG…LWIW).

This sequence belongs to the major facilitator superfamily. LplT (TC 2.A.1.42) family.

It is found in the cell inner membrane. Its function is as follows. Catalyzes the facilitated diffusion of 2-acyl-glycero-3-phosphoethanolamine (2-acyl-GPE) into the cell. The protein is Lysophospholipid transporter LplT of Salmonella paratyphi B (strain ATCC BAA-1250 / SPB7).